Reading from the N-terminus, the 292-residue chain is ATP synthase gamma chain (292 aa).

This sequence belongs to the ATPase gamma chain family. In terms of assembly, F-type ATPases have 2 components, CF(1) - the catalytic core - and CF(0) - the membrane proton channel. CF(1) has five subunits: alpha(3), beta(3), gamma(1), delta(1), epsilon(1). CF(0) has three main subunits: a, b and c.

The protein resides in the cell membrane. Its function is as follows. Produces ATP from ADP in the presence of a proton gradient across the membrane. The gamma chain is believed to be important in regulating ATPase activity and the flow of protons through the CF(0) complex. This Streptococcus pneumoniae (strain JJA) protein is ATP synthase gamma chain.